A 443-amino-acid chain; its full sequence is Probable glycine dehydrogenase (decarboxylating) subunit 1 (443 aa).

This sequence belongs to the GcvP family. N-terminal subunit subfamily. As to quaternary structure, the glycine cleavage system is composed of four proteins: P, T, L and H. In this organism, the P 'protein' is a heterodimer of two subunits.

It catalyses the reaction N(6)-[(R)-lipoyl]-L-lysyl-[glycine-cleavage complex H protein] + glycine + H(+) = N(6)-[(R)-S(8)-aminomethyldihydrolipoyl]-L-lysyl-[glycine-cleavage complex H protein] + CO2. Its function is as follows. The glycine cleavage system catalyzes the degradation of glycine. The P protein binds the alpha-amino group of glycine through its pyridoxal phosphate cofactor; CO(2) is released and the remaining methylamine moiety is then transferred to the lipoamide cofactor of the H protein. The protein is Probable glycine dehydrogenase (decarboxylating) subunit 1 of Nitratidesulfovibrio vulgaris (strain DSM 19637 / Miyazaki F) (Desulfovibrio vulgaris).